We begin with the raw amino-acid sequence, 34 residues long: Photosystem I reaction center subunit XII (34 aa).

A helical transmembrane segment spans residues 9–29 (LIALSLIVVVHAGVLALRLGI).

The protein belongs to the PsaM family.

It localises to the cellular thylakoid membrane. This Prochlorococcus marinus (strain MIT 9312) protein is Photosystem I reaction center subunit XII.